A 173-amino-acid polypeptide reads, in one-letter code: Photosystem I assembly protein Ycf3 (173 aa).

3 TPR repeats span residues 35-68 (AFSYYRDGMSAQSEGEYAEALENYYEALKLEEDP), 72-105 (SYILYNIGLIYASNGEYIKALEYYHQGLELNFKL), and 120-153 (GVQAVEEKNIELSKLMFDKAAQYWQQAIKLAPDN).

Belongs to the Ycf3 family.

The protein resides in the plastid. The protein localises to the chloroplast thylakoid membrane. In terms of biological role, essential for the assembly of the photosystem I (PSI) complex. May act as a chaperone-like factor to guide the assembly of the PSI subunits. The sequence is that of Photosystem I assembly protein Ycf3 from Porphyra purpurea (Red seaweed).